A 493-amino-acid polypeptide reads, in one-letter code: Glutamyl-tRNA(Gln) amidotransferase subunit A (493 aa).

Residues Lys-78 and Ser-158 each act as charge relay system in the active site. Ser-182 functions as the Acyl-ester intermediate in the catalytic mechanism.

The protein belongs to the amidase family. GatA subfamily. Heterotrimer of A, B and C subunits.

The catalysed reaction is L-glutamyl-tRNA(Gln) + L-glutamine + ATP + H2O = L-glutaminyl-tRNA(Gln) + L-glutamate + ADP + phosphate + H(+). In terms of biological role, allows the formation of correctly charged Gln-tRNA(Gln) through the transamidation of misacylated Glu-tRNA(Gln) in organisms which lack glutaminyl-tRNA synthetase. The reaction takes place in the presence of glutamine and ATP through an activated gamma-phospho-Glu-tRNA(Gln). In Methylorubrum extorquens (strain PA1) (Methylobacterium extorquens), this protein is Glutamyl-tRNA(Gln) amidotransferase subunit A.